The sequence spans 319 residues: D-alanine--D-alanine ligase (319 aa).

Residues 109–313 (KRVWLAEGLP…YEQLCLHILQ (205 aa)) form the ATP-grasp domain. 139-194 (PDDLGLPLIVKPPREGSSIGVTKVLGYSQMQDAVALSARHDPDVLCEEFIDGAEVT) contributes to the ATP binding site. Mg(2+) contacts are provided by Asp266, Glu280, and Asn282.

It belongs to the D-alanine--D-alanine ligase family. The cofactor is Mg(2+). Mn(2+) is required as a cofactor.

It is found in the cytoplasm. It carries out the reaction 2 D-alanine + ATP = D-alanyl-D-alanine + ADP + phosphate + H(+). The protein operates within cell wall biogenesis; peptidoglycan biosynthesis. Functionally, cell wall formation. In Methylibium petroleiphilum (strain ATCC BAA-1232 / LMG 22953 / PM1), this protein is D-alanine--D-alanine ligase.